We begin with the raw amino-acid sequence, 217 residues long: Protein-L-isoaspartate O-methyltransferase (217 aa).

Ser65 is a catalytic residue.

It belongs to the methyltransferase superfamily. L-isoaspartyl/D-aspartyl protein methyltransferase family.

It localises to the cytoplasm. It carries out the reaction [protein]-L-isoaspartate + S-adenosyl-L-methionine = [protein]-L-isoaspartate alpha-methyl ester + S-adenosyl-L-homocysteine. In terms of biological role, catalyzes the methyl esterification of L-isoaspartyl residues in peptides and proteins that result from spontaneous decomposition of normal L-aspartyl and L-asparaginyl residues. It plays a role in the repair and/or degradation of damaged proteins. The chain is Protein-L-isoaspartate O-methyltransferase from Methanoregula boonei (strain DSM 21154 / JCM 14090 / 6A8).